Here is a 51-residue protein sequence, read N- to C-terminus: Insulin (51 aa).

Disulfide bonds link cysteine 7–cysteine 37, cysteine 19–cysteine 50, and cysteine 36–cysteine 41.

The protein belongs to the insulin family. In terms of assembly, heterodimer of a B chain and an A chain linked by two disulfide bonds.

The protein localises to the secreted. Its function is as follows. Insulin decreases blood glucose concentration. It increases cell permeability to monosaccharides, amino acids and fatty acids. It accelerates glycolysis, the pentose phosphate cycle, and glycogen synthesis in liver. This Anguilla rostrata (American eel) protein is Insulin (ins).